Reading from the N-terminus, the 370-residue chain is Dual-specificity RNA methyltransferase RlmN (370 aa).

The active-site Proton acceptor is the E93. The 233-residue stretch at 99–331 folds into the Radical SAM core domain; that stretch reads DRKRGTLCVS…TRVRRTRGDD (233 aa). Cysteines 106 and 336 form a disulfide. Residues C113, C117, and C120 each contribute to the [4Fe-4S] cluster site. S-adenosyl-L-methionine contacts are provided by residues 162–163, S194, 216–218, and N293; these read GE and SLH. C336 functions as the S-methylcysteine intermediate in the catalytic mechanism.

It belongs to the radical SAM superfamily. RlmN family. It depends on [4Fe-4S] cluster as a cofactor.

The protein resides in the cytoplasm. The catalysed reaction is adenosine(2503) in 23S rRNA + 2 reduced [2Fe-2S]-[ferredoxin] + 2 S-adenosyl-L-methionine = 2-methyladenosine(2503) in 23S rRNA + 5'-deoxyadenosine + L-methionine + 2 oxidized [2Fe-2S]-[ferredoxin] + S-adenosyl-L-homocysteine. It carries out the reaction adenosine(37) in tRNA + 2 reduced [2Fe-2S]-[ferredoxin] + 2 S-adenosyl-L-methionine = 2-methyladenosine(37) in tRNA + 5'-deoxyadenosine + L-methionine + 2 oxidized [2Fe-2S]-[ferredoxin] + S-adenosyl-L-homocysteine. In terms of biological role, specifically methylates position 2 of adenine 2503 in 23S rRNA and position 2 of adenine 37 in tRNAs. m2A2503 modification seems to play a crucial role in the proofreading step occurring at the peptidyl transferase center and thus would serve to optimize ribosomal fidelity. This Coxiella burnetii (strain RSA 493 / Nine Mile phase I) protein is Dual-specificity RNA methyltransferase RlmN.